The following is a 549-amino-acid chain: Chaperonin GroEL (549 aa).

Residues 30-33 (TLGP), Lys-51, 87-91 (DGTTT), Gly-415, 479-481 (NAA), and Asp-495 each bind ATP.

The protein belongs to the chaperonin (HSP60) family. As to quaternary structure, forms a cylinder of 14 subunits composed of two heptameric rings stacked back-to-back. Interacts with the co-chaperonin GroES.

Its subcellular location is the cytoplasm. It carries out the reaction ATP + H2O + a folded polypeptide = ADP + phosphate + an unfolded polypeptide.. In terms of biological role, together with its co-chaperonin GroES, plays an essential role in assisting protein folding. The GroEL-GroES system forms a nano-cage that allows encapsulation of the non-native substrate proteins and provides a physical environment optimized to promote and accelerate protein folding. In Stenotrophomonas maltophilia (strain K279a), this protein is Chaperonin GroEL.